Consider the following 1356-residue polypeptide: Vegetative incompatibility protein HET-E-1 (1356 aa).

In terms of domain architecture, NACHT spans 294 to 629 (RLLWINGDPG…DFLLGTASDK (336 aa)). 300–307 (GDPGKGKT) serves as a coordination point for GTP. 10 WD repeats span residues 839–869 (GHGS…KIWD), 881–911 (GHGG…KIWD), 923–953 (GHGG…KIWD), 965–995 (GHGS…KIWD), 1007–1037 (GHGG…KIWD), 1049–1079 (GHGG…KIWD), 1091–1121 (GHGD…KIWD), 1133–1163 (GHGG…KIWD), 1175–1205 (GHGG…KIWD), and 1217–1247 (GHGG…KIWD).

Its function is as follows. Responsible for vegetative incompatibility through specific interactions with different alleles of the unlinked gene, het-c. The polypeptide is Vegetative incompatibility protein HET-E-1 (HET-E1) (Podospora anserina (Pleurage anserina)).